The primary structure comprises 287 residues: Phosphatidylinositol transfer protein 5 (287 aa).

Positions 252–287 (FHNNNNNNSNNSNNNNNNNTQPQRSSFFSRSTDGNK) are disordered. Residues 254-270 (NNNNNNSNNSNNNNNNN) are compositionally biased toward low complexity. Residues 271-287 (TQPQRSSFFSRSTDGNK) are compositionally biased toward polar residues.

It belongs to the PtdIns transfer protein family. PI transfer class IIA subfamily.

Its function is as follows. Phosphatidylinositol transfer proteins mediate the monomeric transport of lipids by shielding a lipid from the aqueous environment and binding the lipid in a hydrophobic cavity. This chain is Phosphatidylinositol transfer protein 5 (pitE), found in Dictyostelium discoideum (Social amoeba).